Here is a 145-residue protein sequence, read N- to C-terminus: Histone H2B.7 (145 aa).

The segment covering 1–30 has biased composition (basic and acidic residues); sequence MAPKAEKKPAEKKPVEEKSKAEKAPAEKKP. The tract at residues 1–53 is disordered; sequence MAPKAEKKPAEKKPVEEKSKAEKAPAEKKPKAGKKLPKEAGAGGDKKKKMKKK. Residue alanine 2 is modified to N,N,N-trimethylalanine; alternate. At alanine 2 the chain carries N,N-dimethylalanine; alternate. At alanine 2 the chain carries N-methylalanine; alternate. Residue lysine 4 is modified to N6-methyllysine; partial. N6-acetyllysine is present on residues lysine 7 and lysine 12. Position 13 is an N6,N6-dimethyllysine (lysine 13). Residues lysine 23, lysine 28, and lysine 34 each carry the N6-acetyllysine modification. N6-acetyllysine; partial is present on lysine 35. Residue lysine 141 forms a Glycyl lysine isopeptide (Lys-Gly) (interchain with G-Cter in ubiquitin) linkage.

It belongs to the histone H2B family. The nucleosome is a histone octamer containing two molecules each of H2A, H2B, H3 and H4 assembled in one H3-H4 heterotetramer and two H2A-H2B heterodimers. The octamer wraps approximately 147 bp of DNA. In terms of processing, can be acetylated to form H2BK6ac, H2BK11ac, H2BK22ac, H2BK27ac H2BK33ac and H2BK34ac. Mono-, di- or trimethylated at the N-terminus to form H2BA1me1/2/3. H2BA1me2 and H2BA1me3 may be methylated and/or acetylated to form H2BA1me2K3me1, H2BA1me2K3me1K6ac, H2BA1me2K6ac H2BA1me3K6ac, H2BA1me3K6acK11ac and H2BA1me2K3me1K6acK11ac. Post-translationally, monoubiquitinated by BRE1 to form H2BK143ub1 and deubiquitinated by UBP26. Required for heterochromatic histone H3 di- and trimethylation at H3K4me. May give a specific tag for epigenetic transcriptional activation.

It localises to the nucleus. The protein resides in the chromosome. Core component of nucleosome. Nucleosomes wrap and compact DNA into chromatin, limiting DNA accessibility to the cellular machineries which require DNA as a template. Histones thereby play a central role in transcription regulation, DNA repair, DNA replication and chromosomal stability. DNA accessibility is regulated via a complex set of post-translational modifications of histones, also called histone code, and nucleosome remodeling. The protein is Histone H2B.7 of Arabidopsis thaliana (Mouse-ear cress).